The sequence spans 404 residues: uncharacterized protein (404 aa).

8 consecutive transmembrane segments (helical) span residues 1–21, 32–52, 89–109, 182–202, 261–281, 285–305, 344–364, and 384–404; these read MNVL…FLFS, VIVG…WEAG, AFAL…AVLY, LFGY…SFMA, LAFV…FGLF, GVTL…LIGV, ATII…AIML, and KAVL…GMFI.

The protein belongs to the concentrative nucleoside transporter (CNT) (TC 2.A.41) family.

The protein resides in the cell membrane. This is an uncharacterized protein from Bacillus subtilis (strain 168).